The chain runs to 212 residues: MAETSNNKTSEEAKANEKKSQSETLEESKLENMNSEESTETTQTESMETAETETSLQTELESAKKEIESLKDSWARERAEFQNFKRRSAQEFVSIRKEAVKSLVSGFLNPIDNLERVGATQTNSEELKPFVDGVTMILKEFYSVLEKSNVIRFDPKGEPFDPMSMEALSSEEGDQYSEETVIDVYQPGYYYKENEDKFTLRPARVRIGKPKS.

The disordered stretch occupies residues Met1–Glu68. Residues Thr9–Leu30 are compositionally biased toward basic and acidic residues. Over residues Glu40–Leu60 the composition is skewed to low complexity.

This sequence belongs to the GrpE family. Homodimer.

The protein resides in the cytoplasm. Participates actively in the response to hyperosmotic and heat shock by preventing the aggregation of stress-denatured proteins, in association with DnaK and GrpE. It is the nucleotide exchange factor for DnaK and may function as a thermosensor. Unfolded proteins bind initially to DnaJ; upon interaction with the DnaJ-bound protein, DnaK hydrolyzes its bound ATP, resulting in the formation of a stable complex. GrpE releases ADP from DnaK; ATP binding to DnaK triggers the release of the substrate protein, thus completing the reaction cycle. Several rounds of ATP-dependent interactions between DnaJ, DnaK and GrpE are required for fully efficient folding. The protein is Protein GrpE of Leptospira interrogans serogroup Icterohaemorrhagiae serovar copenhageni (strain Fiocruz L1-130).